The chain runs to 323 residues: Beta-ketoacyl-[acyl-carrier-protein] synthase III (323 aa).

Catalysis depends on residues cysteine 113 and histidine 250. An ACP-binding region spans residues 251–255 (QANRR). Asparagine 280 is an active-site residue.

This sequence belongs to the thiolase-like superfamily. FabH family. As to quaternary structure, homodimer.

Its subcellular location is the cytoplasm. The enzyme catalyses malonyl-[ACP] + acetyl-CoA + H(+) = 3-oxobutanoyl-[ACP] + CO2 + CoA. It functions in the pathway lipid metabolism; fatty acid biosynthesis. Functionally, catalyzes the condensation reaction of fatty acid synthesis by the addition to an acyl acceptor of two carbons from malonyl-ACP. Catalyzes the first condensation reaction which initiates fatty acid synthesis and may therefore play a role in governing the total rate of fatty acid production. Possesses both acetoacetyl-ACP synthase and acetyl transacylase activities. Its substrate specificity determines the biosynthesis of branched-chain and/or straight-chain of fatty acids. The sequence is that of Beta-ketoacyl-[acyl-carrier-protein] synthase III from Sinorhizobium medicae (strain WSM419) (Ensifer medicae).